Consider the following 68-residue polypeptide: ATP synthase protein 8 (68 aa).

The chain crosses the membrane as a helical span at residues T8–T24. Residue K54 is modified to N6-acetyllysine; alternate. Residue K54 is modified to N6-succinyllysine; alternate. N6-acetyllysine is present on K57.

The protein belongs to the ATPase protein 8 family. As to quaternary structure, F-type ATPases have 2 components, CF(1) - the catalytic core - and CF(0) - the membrane proton channel. Component of an ATP synthase complex composed of ATP5PB, ATP5MC1, ATP5F1E, ATP5PD, ATP5ME, ATP5PF, ATP5MF, MT-ATP6, MT-ATP8, ATP5F1A, ATP5F1B, ATP5F1D, ATP5F1C, ATP5PO, ATP5MG, ATP5MK and ATP5MJ. Interacts with PRICKLE3.

It is found in the mitochondrion membrane. Mitochondrial membrane ATP synthase (F(1)F(0) ATP synthase or Complex V) produces ATP from ADP in the presence of a proton gradient across the membrane which is generated by electron transport complexes of the respiratory chain. F-type ATPases consist of two structural domains, F(1) - containing the extramembraneous catalytic core and F(0) - containing the membrane proton channel, linked together by a central stalk and a peripheral stalk. During catalysis, ATP synthesis in the catalytic domain of F(1) is coupled via a rotary mechanism of the central stalk subunits to proton translocation. Part of the complex F(0) domain. Minor subunit located with subunit a in the membrane. The sequence is that of ATP synthase protein 8 (MT-ATP8) from Pongo pygmaeus (Bornean orangutan).